Reading from the N-terminus, the 61-residue chain is Ferredoxin-3 (61 aa).

4Fe-4S ferredoxin-type domains are found at residues Tyr-2–Gly-31 and Lys-32–Asn-61. [3Fe-4S] cluster-binding residues include Cys-11 and Cys-17. [4Fe-4S] cluster-binding residues include Cys-21, Cys-41, Cys-44, and Cys-47. Cys-51 serves as a coordination point for [3Fe-4S] cluster.

[3Fe-4S] cluster serves as cofactor. [4Fe-4S] cluster is required as a cofactor.

In terms of biological role, ferredoxins are iron-sulfur proteins that transfer electrons in a wide variety of metabolic reactions. In Desulfocurvibacter africanus (Desulfovibrio africanus), this protein is Ferredoxin-3.